We begin with the raw amino-acid sequence, 498 residues long: MLSSSSLYAAIDLGSNSFHMLVARETAGSIQTLAKIKRKVRLAAGLDKQNRLSQDAMQRGWQCLQLFSERLQDIPQDQVRVVATATLRLATNADEFLQRAQEILGLPIQVISGEEEARLIYQGVAHTTGGPDARLVVDIGGGSTELATGVGAKTTQLISLPMGCVTWLDRYFSDRNLEAGNFERAEQAAREMLRPVAASLREQGWQICVGASGTVQALQEIMVAQGMDEYITLPKLRQLKEHAIQCDKLEELEIEGLTLERALVFPSGLAILLAIFQELDIKTMTLAGGALREGLVYGMLHLPVDQDIRHRTLATLQRRYLLDVEQAKRVSTLADNFLQQVARDWQLDNRCRELLRSACLVHEIGLSIDFRQSPQHAAYLIRHSDLPGFTPAQKKLLATLLQNQINPVDLMPLSQQNALPVNQAQRLCRLLRLAIIFASRRRDDTLPAVRLRVEGETLRLILPAGWLSQHPLRAEMLEQESRWQSYVHWPLMLEETPA.

Belongs to the GppA/Ppx family. GppA subfamily.

The catalysed reaction is guanosine 3'-diphosphate 5'-triphosphate + H2O = guanosine 3',5'-bis(diphosphate) + phosphate + H(+). It functions in the pathway purine metabolism; ppGpp biosynthesis; ppGpp from GTP: step 2/2. Catalyzes the conversion of pppGpp to ppGpp. Guanosine pentaphosphate (pppGpp) is a cytoplasmic signaling molecule which together with ppGpp controls the 'stringent response', an adaptive process that allows bacteria to respond to amino acid starvation, resulting in the coordinated regulation of numerous cellular activities. This chain is Guanosine-5'-triphosphate,3'-diphosphate pyrophosphatase, found in Pectobacterium carotovorum subsp. carotovorum (strain PC1).